A 525-amino-acid polypeptide reads, in one-letter code: GMP synthase [glutamine-hydrolyzing] (525 aa).

A Glutamine amidotransferase type-1 domain is found at 8–206 (PLLILDFGSQ…VVDICKASTD (199 aa)). Cysteine 85 acts as the Nucleophile in catalysis. Catalysis depends on residues histidine 180 and glutamate 182. One can recognise a GMPS ATP-PPase domain in the interval 207–400 (WTPEHIIDEA…LGLPHDMVYR (194 aa)). 234 to 240 (SGGVDSS) contributes to the ATP binding site.

As to quaternary structure, homodimer.

The catalysed reaction is XMP + L-glutamine + ATP + H2O = GMP + L-glutamate + AMP + diphosphate + 2 H(+). The protein operates within purine metabolism; GMP biosynthesis; GMP from XMP (L-Gln route): step 1/1. Catalyzes the synthesis of GMP from XMP. In Legionella pneumophila (strain Paris), this protein is GMP synthase [glutamine-hydrolyzing].